The sequence spans 578 residues: GRAM domain-containing protein 4 (578 aa).

Residues 83–135 (HLEIALLEKHFLQEELRKLREETNIDTLKQELEKERQRRTELEQKITDIAKTR) adopt a coiled-coil conformation. The disordered stretch occupies residues 132–157 (AKTRTDESATQQLSKGPSQTNGADKQ). Over residues 139 to 154 (SATQQLSKGPSQTNGA) the composition is skewed to polar residues. The next 3 helical transmembrane spans lie at 236–256 (IAFI…MFLF), 334–354 (MTQK…FFHY), and 356–376 (TIGL…DFIF). The GRAM domain maps to 446 to 524 (SSFHEIFSLL…TDITDIQKYK (79 aa)).

The protein localises to the mitochondrion membrane. The protein resides in the endoplasmic reticulum membrane. Functionally, plays a role as a mediator of e2f1-induced apoptosis in the absence of p53/TP53. This chain is GRAM domain-containing protein 4 (gramd4), found in Xenopus laevis (African clawed frog).